The chain runs to 373 residues: Phospho-N-acetylmuramoyl-pentapeptide-transferase (373 aa).

The next 11 membrane-spanning stretches (helical) occupy residues W16–F36, L46–I66, P93–V113, Q120–W140, L157–I177, L185–A205, L216–M236, G242–M262, V270–L290, L298–F318, and M350–L369.

This sequence belongs to the glycosyltransferase 4 family. MraY subfamily. Requires Mg(2+) as cofactor.

It localises to the cell inner membrane. It carries out the reaction UDP-N-acetyl-alpha-D-muramoyl-L-alanyl-gamma-D-glutamyl-meso-2,6-diaminopimeloyl-D-alanyl-D-alanine + di-trans,octa-cis-undecaprenyl phosphate = di-trans,octa-cis-undecaprenyl diphospho-N-acetyl-alpha-D-muramoyl-L-alanyl-D-glutamyl-meso-2,6-diaminopimeloyl-D-alanyl-D-alanine + UMP. The protein operates within cell wall biogenesis; peptidoglycan biosynthesis. Catalyzes the initial step of the lipid cycle reactions in the biosynthesis of the cell wall peptidoglycan: transfers peptidoglycan precursor phospho-MurNAc-pentapeptide from UDP-MurNAc-pentapeptide onto the lipid carrier undecaprenyl phosphate, yielding undecaprenyl-pyrophosphoryl-MurNAc-pentapeptide, known as lipid I. In Prochlorococcus marinus (strain MIT 9313), this protein is Phospho-N-acetylmuramoyl-pentapeptide-transferase.